We begin with the raw amino-acid sequence, 155 residues long: Ribosomal RNA large subunit methyltransferase H (155 aa).

S-adenosyl-L-methionine is bound by residues Leu-73, Gly-104, and 123–128; that span reads LSPLTL.

This sequence belongs to the RNA methyltransferase RlmH family. As to quaternary structure, homodimer.

The protein localises to the cytoplasm. It carries out the reaction pseudouridine(1915) in 23S rRNA + S-adenosyl-L-methionine = N(3)-methylpseudouridine(1915) in 23S rRNA + S-adenosyl-L-homocysteine + H(+). Functionally, specifically methylates the pseudouridine at position 1915 (m3Psi1915) in 23S rRNA. This chain is Ribosomal RNA large subunit methyltransferase H, found in Ectopseudomonas mendocina (strain ymp) (Pseudomonas mendocina).